We begin with the raw amino-acid sequence, 346 residues long: Aspartate-semialdehyde dehydrogenase (346 aa).

NADP(+) contacts are provided by residues 12 to 15 and 40 to 41; these read SGAV and RS. R101 provides a ligand contact to phosphate. The Acyl-thioester intermediate role is filled by C131. Q158 is a binding site for substrate. 161-162 serves as a coordination point for NADP(+); sequence SG. K225 provides a ligand contact to phosphate. Position 246 (R246) interacts with substrate. H253 (proton acceptor) is an active-site residue. Q326 provides a ligand contact to NADP(+).

It belongs to the aspartate-semialdehyde dehydrogenase family. Homodimer.

The catalysed reaction is L-aspartate 4-semialdehyde + phosphate + NADP(+) = 4-phospho-L-aspartate + NADPH + H(+). It participates in amino-acid biosynthesis; L-lysine biosynthesis via DAP pathway; (S)-tetrahydrodipicolinate from L-aspartate: step 2/4. The protein operates within amino-acid biosynthesis; L-methionine biosynthesis via de novo pathway; L-homoserine from L-aspartate: step 2/3. Its pathway is amino-acid biosynthesis; L-threonine biosynthesis; L-threonine from L-aspartate: step 2/5. Its function is as follows. Catalyzes the NADPH-dependent formation of L-aspartate-semialdehyde (L-ASA) by the reductive dephosphorylation of L-aspartyl-4-phosphate. This is Aspartate-semialdehyde dehydrogenase from Helicobacter pylori (strain ATCC 700392 / 26695) (Campylobacter pylori).